Consider the following 397-residue polypeptide: Glia-derived nexin (397 aa).

An N-terminal signal peptide occupies residues 1–19; sequence MNWHFPFFILTTVTLYSVH. An N-linked (GlcNAc...) asparagine glycan is attached at Asn159.

It belongs to the serpin family. As to expression, most abundant in seminal vesicles.

The protein resides in the secreted. It is found in the extracellular space. In terms of biological role, serine protease inhibitor with activity toward thrombin, trypsin, and urokinase. Promotes neurite extension by inhibiting thrombin. Binds heparin. The sequence is that of Glia-derived nexin (Serpine2) from Mus musculus (Mouse).